Here is a 631-residue protein sequence, read N- to C-terminus: Mitochondrial Rho GTPase 1 (631 aa).

The Cytoplasmic portion of the chain corresponds to 1 to 605 (MPAGRGRPLR…TQADLKSSTF (605 aa)). The region spanning 15–181 (KKDVRILLVG…FYYAQKAVLH (167 aa)) is the Miro 1 domain. R27, G29, K30, T31, and S32 together coordinate GTP. Residue T31 participates in Mg(2+) binding. Mg(2+) contacts are provided by P48 and D70. S72 is a binding site for GTP. Position 105 is an N6-acetyllysine (K105). Residues N131, K132, D134, A162, and K163 each contribute to the GTP site. A Glycyl lysine isopeptide (Lys-Gly) (interchain with G-Cter in ubiquitin) cross-link involves residue K166. One can recognise an EF-hand 1 domain in the interval 197–232 (ACIKALTRIFKISDQDNDGTLNDAELNFFQRICFNT). The Ca(2+) site is built by D210, D212, D214, T216, and E221. K248 participates in a covalent cross-link: Glycyl lysine isopeptide (Lys-Gly) (interchain with G-Cter in ubiquitin). One can recognise an EF-hand 2 domain in the interval 317 to 352 (HAYLFLQSTFDKHDLDRDCALSPDELKDLFKVFPYI). Residues D330, D332, D334, A336, and E341 each coordinate Ca(2+). The Miro 2 domain maps to 429 to 592 (RNVFRCNVIG…FVKLTTMAMY (164 aa)). Residues N441, C442, G443, K444, S445, G446, K460, K541, D543, T571, and C572 each coordinate GTP. Residue N441 coordinates Mg(2+). K585 is covalently cross-linked (Glycyl lysine isopeptide (Lys-Gly) (interchain with G-Cter in ubiquitin)). The chain crosses the membrane as a helical; Anchor for type IV membrane protein span at residues 606–628 (WLRASFGATVFAVLGFAMYKALL). Residues 629 to 631 (KQR) are Mitochondrial intermembrane-facing.

This sequence belongs to the mitochondrial Rho GTPase family. Homodimer. Interacts with the kinesin-binding proteins TRAK1/OIP106 and TRAK2/GRIF1, forming a link between mitochondria and the trafficking apparatus of the microtubules. Interacts with RAP1GDS1. Interacts with ARMCX1. Found in a complex with KIF5B, OGT, RHOT2 and TRAK1. In terms of processing, ubiquitinated by PRKN during mitophagy, leading to its degradation and enhancement of mitophagy. Deubiquitinated by USP30. Post-translationally, acetylation on Lys-105 decreases sensitivity of mitochondrial transport to elevated Ca(2+) levels, increases mitochondrial transport and promotes axon growth. Deacetylated by HDAC6 which blocks mitochondrial transport and mediates axon growth inhibition.

It localises to the mitochondrion outer membrane. It carries out the reaction GTP + H2O = GDP + phosphate + H(+). The enzyme catalyses ATP + H2O = ADP + phosphate + H(+). It catalyses the reaction UTP + H2O = UDP + phosphate + H(+). Atypical mitochondrial nucleoside-triphosphatase (NTPase) involved in mitochondrial trafficking. Probably involved in control of anterograde transport of mitochondria and their subcellular distribution. Promotes mitochondrial fission during high calcium conditions. Can hydrolyze GTP, ATP and UTP. This is Mitochondrial Rho GTPase 1 (RHOT1) from Bos taurus (Bovine).